Reading from the N-terminus, the 248-residue chain is 2,3-bisphosphoglycerate-dependent phosphoglycerate mutase (248 aa).

Substrate is bound by residues 8–15 (RHGESEWN), 21–22 (TG), arginine 60, 87–90 (ERHY), lysine 98, 114–115 (RR), and 183–184 (GN). Catalysis depends on histidine 9, which acts as the Tele-phosphohistidine intermediate. Glutamate 87 acts as the Proton donor/acceptor in catalysis.

The protein belongs to the phosphoglycerate mutase family. BPG-dependent PGAM subfamily.

The enzyme catalyses (2R)-2-phosphoglycerate = (2R)-3-phosphoglycerate. It participates in carbohydrate degradation; glycolysis; pyruvate from D-glyceraldehyde 3-phosphate: step 3/5. Functionally, catalyzes the interconversion of 2-phosphoglycerate and 3-phosphoglycerate. This is 2,3-bisphosphoglycerate-dependent phosphoglycerate mutase from Coprothermobacter proteolyticus (strain ATCC 35245 / DSM 5265 / OCM 4 / BT).